A 273-amino-acid chain; its full sequence is Ribosomal RNA small subunit methyltransferase A (273 aa).

6 residues coordinate S-adenosyl-L-methionine: asparagine 18, leucine 20, glycine 45, glutamate 66, aspartate 91, and asparagine 113.

Belongs to the class I-like SAM-binding methyltransferase superfamily. rRNA adenine N(6)-methyltransferase family. RsmA subfamily.

It localises to the cytoplasm. The catalysed reaction is adenosine(1518)/adenosine(1519) in 16S rRNA + 4 S-adenosyl-L-methionine = N(6)-dimethyladenosine(1518)/N(6)-dimethyladenosine(1519) in 16S rRNA + 4 S-adenosyl-L-homocysteine + 4 H(+). In terms of biological role, specifically dimethylates two adjacent adenosines (A1518 and A1519) in the loop of a conserved hairpin near the 3'-end of 16S rRNA in the 30S particle. May play a critical role in biogenesis of 30S subunits. The chain is Ribosomal RNA small subunit methyltransferase A from Escherichia coli (strain 55989 / EAEC).